Here is a 474-residue protein sequence, read N- to C-terminus: UDP-N-acetylmuramate--L-alanine ligase (474 aa).

Position 116–122 (116–122) interacts with ATP; the sequence is GTHGKTT.

Belongs to the MurCDEF family.

The protein resides in the cytoplasm. It carries out the reaction UDP-N-acetyl-alpha-D-muramate + L-alanine + ATP = UDP-N-acetyl-alpha-D-muramoyl-L-alanine + ADP + phosphate + H(+). Its pathway is cell wall biogenesis; peptidoglycan biosynthesis. Its function is as follows. Cell wall formation. In Hyphomonas neptunium (strain ATCC 15444), this protein is UDP-N-acetylmuramate--L-alanine ligase.